The chain runs to 212 residues: Negative modulator of initiation of replication (212 aa).

2 interaction with DNA regions span residues 113–114 (AV) and 144–148 (RTRVY).

This sequence belongs to the SeqA family. In terms of assembly, homodimer. Polymerizes to form helical filaments.

The protein localises to the cytoplasm. In terms of biological role, negative regulator of replication initiation, which contributes to regulation of DNA replication and ensures that replication initiation occurs exactly once per chromosome per cell cycle. Binds to pairs of hemimethylated GATC sequences in the oriC region, thus preventing assembly of replication proteins and re-initiation at newly replicated origins. Repression is relieved when the region becomes fully methylated. This Actinobacillus succinogenes (strain ATCC 55618 / DSM 22257 / CCUG 43843 / 130Z) protein is Negative modulator of initiation of replication.